Consider the following 338-residue polypeptide: 1-aminocyclopropane-1-carboxylate deaminase (338 aa).

At lysine 51 the chain carries N6-(pyridoxal phosphate)lysine. Serine 78 functions as the Nucleophile in the catalytic mechanism.

The protein belongs to the ACC deaminase/D-cysteine desulfhydrase family. In terms of assembly, homotrimer. Requires pyridoxal 5'-phosphate as cofactor.

It catalyses the reaction 1-aminocyclopropane-1-carboxylate + H2O = 2-oxobutanoate + NH4(+). Its function is as follows. Catalyzes a cyclopropane ring-opening reaction, the irreversible conversion of 1-aminocyclopropane-1-carboxylate (ACC) to ammonia and alpha-ketobutyrate. Allows growth on ACC as a nitrogen source. This Pseudomonas sp. (strain ACP) protein is 1-aminocyclopropane-1-carboxylate deaminase.